Reading from the N-terminus, the 1892-residue chain is Protein TIC 214 (1892 aa).

Helical transmembrane passes span 12 to 32, 68 to 88, 89 to 109, 128 to 148, 176 to 196, and 225 to 245; these read LISL…YYGF, FIAG…HLAL, GKPH…FFWN, LSIQ…HFIL, VGWL…LVWI, and IFSI…PSPI. Residues 256-266 show a composition bias toward acidic residues; that stretch reads PEEVGESEEER. Residues 256-299 form a disordered region; the sequence is PEEVGESEEERNIEIETISEGGGANQKQGTEENTSSSLFSEEEV. Positions 280–294 are enriched in polar residues; sequence NQKQGTEENTSSSLF. Residues 1115–1135 traverse the membrane as a helical segment; that stretch reads FYFFINFFIEKIYMDILLYII. Positions 1613–1636 are disordered; the sequence is SNQEKDVEEDYDKSDKKKRRKKKQ.

It belongs to the TIC214 family. As to quaternary structure, part of the Tic complex.

The protein localises to the plastid. Its subcellular location is the chloroplast inner membrane. Its function is as follows. Involved in protein precursor import into chloroplasts. May be part of an intermediate translocation complex acting as a protein-conducting channel at the inner envelope. The polypeptide is Protein TIC 214 (Gossypium hirsutum (Upland cotton)).